Here is a 370-residue protein sequence, read N- to C-terminus: DNA replication and repair protein RecF (370 aa).

33 to 40 (GPNAAGKT) serves as a coordination point for ATP.

The protein belongs to the RecF family.

Its subcellular location is the cytoplasm. The RecF protein is involved in DNA metabolism; it is required for DNA replication and normal SOS inducibility. RecF binds preferentially to single-stranded, linear DNA. It also seems to bind ATP. The sequence is that of DNA replication and repair protein RecF from Moorella thermoacetica (strain ATCC 39073 / JCM 9320).